Consider the following 250-residue polypeptide: Flavin-dependent thymidylate synthase (250 aa).

Positions 7–233 (LRVQLIAKTD…PAVFADFEIA (227 aa)) constitute a ThyX domain. FAD-binding positions include serine 71, 95-97 (RHR), and glutamine 103. DUMP is bound by residues 92–95 (ELIR), 103–107 (QLSQR), and arginine 172. A ThyX motif motif is present at residues 95–105 (RHRHFSYSQLS). FAD contacts are provided by residues 188–190 (NYR) and histidine 194. DUMP is bound at residue arginine 199. The active-site Involved in ionization of N3 of dUMP, leading to its activation is arginine 199.

It belongs to the thymidylate synthase ThyX family. As to quaternary structure, homotetramer. The cofactor is FAD.

It catalyses the reaction dUMP + (6R)-5,10-methylene-5,6,7,8-tetrahydrofolate + NADPH + H(+) = dTMP + (6S)-5,6,7,8-tetrahydrofolate + NADP(+). The protein operates within pyrimidine metabolism; dTTP biosynthesis. In terms of biological role, catalyzes the reductive methylation of 2'-deoxyuridine-5'-monophosphate (dUMP) to 2'-deoxythymidine-5'-monophosphate (dTMP) while utilizing 5,10-methylenetetrahydrofolate (mTHF) as the methyl donor, and NADPH and FADH(2) as the reductant. The chain is Flavin-dependent thymidylate synthase from Mycobacterium avium (strain 104).